The primary structure comprises 164 residues: Protein SprT (164 aa).

The SprT-like domain maps to Y13–V156. H69 is a Zn(2+) binding site. E70 is an active-site residue. Zn(2+) is bound at residue H73.

This sequence belongs to the SprT family. Zn(2+) serves as cofactor.

The protein resides in the cytoplasm. The polypeptide is Protein SprT (Pseudomonas putida (strain ATCC 700007 / DSM 6899 / JCM 31910 / BCRC 17059 / LMG 24140 / F1)).